The primary structure comprises 432 residues: Trigger factor (432 aa).

Positions 161–246 (GTRATINFVG…VVKVEARELP (86 aa)) constitute a PPIase FKBP-type domain.

The protein belongs to the FKBP-type PPIase family. Tig subfamily.

It localises to the cytoplasm. It catalyses the reaction [protein]-peptidylproline (omega=180) = [protein]-peptidylproline (omega=0). Involved in protein export. Acts as a chaperone by maintaining the newly synthesized protein in an open conformation. Functions as a peptidyl-prolyl cis-trans isomerase. This Aliivibrio salmonicida (strain LFI1238) (Vibrio salmonicida (strain LFI1238)) protein is Trigger factor.